The chain runs to 428 residues: MFVDQVKIYVKGGDGGNGMVAYRREKYVPKGGPAGGDGGKGADVVFVVEEGLRTLMDFRYQRHFKADRGQHGMSKGQHGRKAEDLIVKVPPGTVVKDEKTGQILADLVTHGQSAVIARGGRGGRGNSRFATPTNPAPEIAENGEPGQERDVILELKVLADVGLVGFPSVGKSTLLSVVSSARPKIAEYHFTTIVPNLGVVETGDNRSFVMADLPGLIEGAHAGVGLGHQFLRHIERTRVIVHVIDMSGLEGRDPYEDYVTINNELKEYNLRLTERPQVVVANKMDMPDAEENLQAFKEKVGDEVKIFPISAVTKQGVRDLLFEVANLLETTPEFPIHEVADESDTSVMYKLETEGVKFDITRESDGTFVISGYDIEKTFKMTDFSRDESVRRFARQMRGMGIDEALRARGAKDGDIVKILEYEFEFID.

Positions 1–158 constitute an Obg domain; the sequence is MFVDQVKIYV…RDVILELKVL (158 aa). Residues 117 to 145 form a disordered region; sequence ARGGRGGRGNSRFATPTNPAPEIAENGEP. Positions 159-329 constitute an OBG-type G domain; it reads ADVGLVGFPS…LLFEVANLLE (171 aa). GTP contacts are provided by residues 165–172, 190–194, 212–215, 282–285, and 310–312; these read GFPSVGKS, FTTIV, DLPG, NKMD, and SAV. Positions 172 and 192 each coordinate Mg(2+). Residues 350-428 form the OCT domain; sequence KLETEGVKFD…ILEYEFEFID (79 aa).

It belongs to the TRAFAC class OBG-HflX-like GTPase superfamily. OBG GTPase family. Monomer. It depends on Mg(2+) as a cofactor.

It localises to the cytoplasm. Its function is as follows. An essential GTPase which binds GTP, GDP and possibly (p)ppGpp with moderate affinity, with high nucleotide exchange rates and a fairly low GTP hydrolysis rate. Plays a role in control of the cell cycle, stress response, ribosome biogenesis and in those bacteria that undergo differentiation, in morphogenesis control. The chain is GTPase Obg from Bacillus cereus (strain ATCC 10987 / NRS 248).